The primary structure comprises 362 residues: Endolytic peptidoglycan transglycosylase RlpA (362 aa).

The N-terminal stretch at 1–17 is a signal peptide; it reads MRKQWLGICIAAGMLAA. The N-palmitoyl cysteine moiety is linked to residue Cys18. The S-diacylglycerol cysteine moiety is linked to residue Cys18. The interval 198–276 is disordered; sequence PDLSGGAGTS…PSTTPATSPA (79 aa). Residues 262–276 are compositionally biased toward low complexity; that stretch reads PVVTAPSTTPATSPA. In terms of domain architecture, SPOR spans 285-361; it reads QSASGNFMVQ…AQLQSFITTA (77 aa).

This sequence belongs to the RlpA family.

The protein localises to the cell membrane. In terms of biological role, lytic transglycosylase with a strong preference for naked glycan strands that lack stem peptides. This chain is Endolytic peptidoglycan transglycosylase RlpA, found in Escherichia coli (strain K12).